The chain runs to 226 residues: Putative uroporphyrinogen-III synthase (226 aa).

Belongs to the uroporphyrinogen-III synthase family.

The enzyme catalyses hydroxymethylbilane = uroporphyrinogen III + H2O. The protein operates within porphyrin-containing compound metabolism; protoporphyrin-IX biosynthesis; coproporphyrinogen-III from 5-aminolevulinate: step 3/4. Catalyzes cyclization of the linear tetrapyrrole, hydroxymethylbilane, to the macrocyclic uroporphyrinogen III. This is Putative uroporphyrinogen-III synthase from Archaeoglobus fulgidus (strain ATCC 49558 / DSM 4304 / JCM 9628 / NBRC 100126 / VC-16).